Reading from the N-terminus, the 451-residue chain is UBP1-associated protein 2B (451 aa).

A disordered region spans residues 1-86 (MTKKRKLESE…GNEDDDEEEP (86 aa)). Basic and acidic residues-rich tracts occupy residues 25–38 (CEKE…VDNQ) and 49–63 (DTLK…KGED). Residues 67–77 (AETSSGSGNQG) are compositionally biased toward polar residues. RRM domains lie at 128–236 (RKIF…NVSA) and 227–314 (RKIY…QHQH). Disordered regions lie at residues 302 to 335 (ANDG…GYGA) and 423 to 451 (GGYQ…YMGR). The segment covering 431–451 (GQGGAGRGQHGAGYGGPYMGR) has biased composition (gly residues).

Expressed in shoot meristem and flowers.

It localises to the nucleus. Heterogeneous nuclear ribonucleoprotein (hnRNP)-like protein that acts as a component of a complex regulating the turnover of mRNAs in the nucleus. Binds with high affinity to RNA molecules that contain U-rich sequences in 3'-UTRs. May function in complex with UBP1 and contribute to the stabilization of mRNAs in the nucleus. The polypeptide is UBP1-associated protein 2B (UBA2B) (Arabidopsis thaliana (Mouse-ear cress)).